We begin with the raw amino-acid sequence, 466 residues long: Trigger factor (466 aa).

The region spanning 162–243 (GDVVSIDLSA…VRSVKERELP (82 aa)) is the PPIase FKBP-type domain. A disordered region spans residues 428–466 (GNTIDTSEFFGKRVSAGEAEEAEPADEGAARAASDEATT). A compositionally biased stretch (low complexity) spans 457–466 (ARAASDEATT).

Belongs to the FKBP-type PPIase family. Tig subfamily.

The protein resides in the cytoplasm. It catalyses the reaction [protein]-peptidylproline (omega=180) = [protein]-peptidylproline (omega=0). Involved in protein export. Acts as a chaperone by maintaining the newly synthesized protein in an open conformation. Functions as a peptidyl-prolyl cis-trans isomerase. The polypeptide is Trigger factor (Mycobacterium bovis (strain BCG / Tokyo 172 / ATCC 35737 / TMC 1019)).